The sequence spans 396 residues: Phosphoglycerate kinase (396 aa).

Substrate contacts are provided by residues 21 to 23 (DFN), R36, 59 to 62 (HLGR), R118, and R151. Residues K201, G292, E323, and 349 to 352 (GGDS) contribute to the ATP site.

The protein belongs to the phosphoglycerate kinase family. Monomer.

The protein localises to the cytoplasm. The catalysed reaction is (2R)-3-phosphoglycerate + ATP = (2R)-3-phospho-glyceroyl phosphate + ADP. The protein operates within carbohydrate degradation; glycolysis; pyruvate from D-glyceraldehyde 3-phosphate: step 2/5. This Leptospira biflexa serovar Patoc (strain Patoc 1 / Ames) protein is Phosphoglycerate kinase.